Here is a 96-residue protein sequence, read N- to C-terminus: Co-chaperonin GroES 1 (96 aa).

This sequence belongs to the GroES chaperonin family. In terms of assembly, heptamer of 7 subunits arranged in a ring. Interacts with the chaperonin GroEL.

The protein resides in the cytoplasm. Functionally, together with the chaperonin GroEL, plays an essential role in assisting protein folding. The GroEL-GroES system forms a nano-cage that allows encapsulation of the non-native substrate proteins and provides a physical environment optimized to promote and accelerate protein folding. GroES binds to the apical surface of the GroEL ring, thereby capping the opening of the GroEL channel. This is Co-chaperonin GroES 1 from Vibrio cholerae serotype O1 (strain ATCC 39315 / El Tor Inaba N16961).